The primary structure comprises 104 residues: Glutaredoxin-C15 (104 aa).

One can recognise a Glutaredoxin domain in the interval 1 to 103; it reads MERVAKLSTE…PMLKAAGAIW (103 aa). Cys21 and Cys24 are oxidised to a cystine.

The protein belongs to the glutaredoxin family. CC-type subfamily.

It localises to the cytoplasm. Has a glutathione-disulfide oxidoreductase activity in the presence of NADPH and glutathione reductase. Reduces low molecular weight disulfides and proteins. The chain is Glutaredoxin-C15 (GRXC15) from Oryza sativa subsp. japonica (Rice).